We begin with the raw amino-acid sequence, 589 residues long: 2-succinyl-5-enolpyruvyl-6-hydroxy-3-cyclohexene-1-carboxylate synthase (589 aa).

The tract at residues Asp198 to Pro222 is disordered.

This sequence belongs to the TPP enzyme family. MenD subfamily. As to quaternary structure, homodimer. Requires Mg(2+) as cofactor. Mn(2+) is required as a cofactor. Thiamine diphosphate serves as cofactor.

It catalyses the reaction isochorismate + 2-oxoglutarate + H(+) = 5-enolpyruvoyl-6-hydroxy-2-succinyl-cyclohex-3-ene-1-carboxylate + CO2. It participates in quinol/quinone metabolism; 1,4-dihydroxy-2-naphthoate biosynthesis; 1,4-dihydroxy-2-naphthoate from chorismate: step 2/7. The protein operates within quinol/quinone metabolism; menaquinone biosynthesis. Functionally, catalyzes the thiamine diphosphate-dependent decarboxylation of 2-oxoglutarate and the subsequent addition of the resulting succinic semialdehyde-thiamine pyrophosphate anion to isochorismate to yield 2-succinyl-5-enolpyruvyl-6-hydroxy-3-cyclohexene-1-carboxylate (SEPHCHC). The protein is 2-succinyl-5-enolpyruvyl-6-hydroxy-3-cyclohexene-1-carboxylate synthase of Corynebacterium jeikeium (strain K411).